The primary structure comprises 204 residues: FMN-dependent NADH:quinone oxidoreductase (204 aa).

FMN contacts are provided by residues S10, 16 to 18 (SIS), and 96 to 99 (MYNF).

Belongs to the azoreductase type 1 family. Homodimer. FMN is required as a cofactor.

It carries out the reaction 2 a quinone + NADH + H(+) = 2 a 1,4-benzosemiquinone + NAD(+). It catalyses the reaction N,N-dimethyl-1,4-phenylenediamine + anthranilate + 2 NAD(+) = 2-(4-dimethylaminophenyl)diazenylbenzoate + 2 NADH + 2 H(+). Functionally, quinone reductase that provides resistance to thiol-specific stress caused by electrophilic quinones. Also exhibits azoreductase activity. Catalyzes the reductive cleavage of the azo bond in aromatic azo compounds to the corresponding amines. The chain is FMN-dependent NADH:quinone oxidoreductase from Herminiimonas arsenicoxydans.